The primary structure comprises 351 residues: Peptidyl-Lys metalloendopeptidase (351 aa).

A signal peptide spans 1–22; the sequence is MFSLSSRFFLYSLCLSAVAVSA. The propeptide occupies 23–183; the sequence is APGLSLSLSG…VARRSNLGKR (161 aa). 2 disulfides stabilise this stretch: cysteine 189–cysteine 259 and cysteine 261–cysteine 281. Histidine 301 contributes to the Zn(2+) binding site. Glutamate 302 is a catalytic residue. 2 residues coordinate Zn(2+): histidine 305 and aspartate 314.

Belongs to the peptidase M35 family. It depends on Zn(2+) as a cofactor.

Its subcellular location is the secreted. It catalyses the reaction Preferential cleavage in proteins: -Xaa-|-Lys- (in which Xaa may be Pro).. Its activity is regulated as follows. Inhibited by chelating agents such as imidazole, alpha,alpha'-bipyridine, and 1,10-phenanthroline. The chain is Peptidyl-Lys metalloendopeptidase (MEP) from Armillaria mellea (Honey mushroom).